The following is a 311-amino-acid chain: Probable deoxyhypusine synthase (311 aa).

The Nucleophile role is filled by K284.

It belongs to the deoxyhypusine synthase family. NAD(+) is required as a cofactor.

The catalysed reaction is [eIF5A protein]-L-lysine + spermidine = [eIF5A protein]-deoxyhypusine + propane-1,3-diamine. The protein operates within protein modification; eIF5A hypusination. Functionally, catalyzes the NAD-dependent oxidative cleavage of spermidine and the subsequent transfer of the butylamine moiety of spermidine to the epsilon-amino group of a specific lysine residue of the eIF-5A precursor protein to form the intermediate deoxyhypusine residue. In Sulfolobus acidocaldarius (strain ATCC 33909 / DSM 639 / JCM 8929 / NBRC 15157 / NCIMB 11770), this protein is Probable deoxyhypusine synthase.